We begin with the raw amino-acid sequence, 431 residues long: Enolase (431 aa).

Position 167 (glutamine 167) interacts with (2R)-2-phosphoglycerate. The active-site Proton donor is glutamate 209. Positions 246, 290, and 317 each coordinate Mg(2+). (2R)-2-phosphoglycerate contacts are provided by lysine 342, arginine 371, serine 372, and lysine 393. Lysine 342 (proton acceptor) is an active-site residue.

It belongs to the enolase family. Component of the RNA degradosome, a multiprotein complex involved in RNA processing and mRNA degradation. It depends on Mg(2+) as a cofactor.

The protein resides in the cytoplasm. It localises to the secreted. The protein localises to the cell surface. It catalyses the reaction (2R)-2-phosphoglycerate = phosphoenolpyruvate + H2O. The protein operates within carbohydrate degradation; glycolysis; pyruvate from D-glyceraldehyde 3-phosphate: step 4/5. Its function is as follows. Catalyzes the reversible conversion of 2-phosphoglycerate (2-PG) into phosphoenolpyruvate (PEP). It is essential for the degradation of carbohydrates via glycolysis. The protein is Enolase of Erwinia tasmaniensis (strain DSM 17950 / CFBP 7177 / CIP 109463 / NCPPB 4357 / Et1/99).